A 288-amino-acid polypeptide reads, in one-letter code: Acetyl-coenzyme A carboxylase carboxyl transferase subunit beta (288 aa).

The region spanning 34 to 288 (LWVKCSRCNE…ANILSLHGTN (255 aa)) is the CoA carboxyltransferase N-terminal domain. Zn(2+)-binding residues include Cys-38, Cys-41, Cys-57, and Cys-60. Residues 38 to 60 (CSRCNEILYTKELDKNFKVCHKC) form a C4-type zinc finger.

This sequence belongs to the AccD/PCCB family. Acetyl-CoA carboxylase is a heterohexamer composed of biotin carboxyl carrier protein (AccB), biotin carboxylase (AccC) and two subunits each of ACCase subunit alpha (AccA) and ACCase subunit beta (AccD). Zn(2+) is required as a cofactor.

It localises to the cytoplasm. It carries out the reaction N(6)-carboxybiotinyl-L-lysyl-[protein] + acetyl-CoA = N(6)-biotinyl-L-lysyl-[protein] + malonyl-CoA. The protein operates within lipid metabolism; malonyl-CoA biosynthesis; malonyl-CoA from acetyl-CoA: step 1/1. Component of the acetyl coenzyme A carboxylase (ACC) complex. Biotin carboxylase (BC) catalyzes the carboxylation of biotin on its carrier protein (BCCP) and then the CO(2) group is transferred by the transcarboxylase to acetyl-CoA to form malonyl-CoA. The sequence is that of Acetyl-coenzyme A carboxylase carboxyl transferase subunit beta from Desulforamulus reducens (strain ATCC BAA-1160 / DSM 100696 / MI-1) (Desulfotomaculum reducens).